The following is a 424-amino-acid chain: Ancylostoma secreted protein (424 aa).

The first 18 residues, 1 to 18 (MFSPVIVSVIFTIAFCDA), serve as a signal peptide directing secretion. 2 consecutive SCP domains span residues 41–177 (LDFH…SCIY) and 242–387 (LSVH…VCQY).

It belongs to the CRISP family.

Its subcellular location is the secreted. In terms of biological role, associated with the transition to parasitism by infective hookworm larvae. This Ancylostoma caninum (Dog hookworm) protein is Ancylostoma secreted protein (ASP).